We begin with the raw amino-acid sequence, 444 residues long: Homocysteine/cysteine synthase (444 aa).

Position 44 is a phosphoserine (S44). K160 is covalently cross-linked (Glycyl lysine isopeptide (Lys-Gly) (interchain with G-Cter in ubiquitin)). N6-(pyridoxal phosphate)lysine is present on K209.

The protein belongs to the trans-sulfuration enzymes family. As to quaternary structure, homotetramer. It depends on pyridoxal 5'-phosphate as a cofactor.

Its subcellular location is the cytoplasm. The catalysed reaction is O-acetyl-L-homoserine + methanethiol = L-methionine + acetate + H(+). It carries out the reaction O-acetyl-L-homoserine + hydrogen sulfide = L-homocysteine + acetate. It catalyses the reaction O-acetyl-L-serine + hydrogen sulfide = L-cysteine + acetate. It functions in the pathway amino-acid biosynthesis; L-methionine biosynthesis via de novo pathway; L-homocysteine from O-acetyl-L-homoserine. Functionally, catalyzes the conversion of O-acetyl-L-homoserine (OAH) into homocysteine in the methionine biosynthesis pathway. Required to efficiently reduce toxic levels of hydrogen sulfide generated when the sulfate assimilation pathway (SAP) is active. Also catalyzes the conversion of O-acetylserine (OAS) into cysteine, the last step in the cysteine biosynthesis pathway. However, it seems that in S.cerevisiae cysteine biosynthesis occurs exclusively through the cystathionine pathway and not via direct incorporation of sulfur into OAS. It therefore has no metabolic role in cysteine biosynthesis and may only have a regulatory role controlling OAS levels. The sequence is that of Homocysteine/cysteine synthase from Saccharomyces cerevisiae (strain ATCC 204508 / S288c) (Baker's yeast).